A 287-amino-acid polypeptide reads, in one-letter code: Diphthine methyl ester synthase (287 aa).

Residues Leu9, Asp84, Gly87, 112–113 (SI), Leu163, Val221, and His248 contribute to the S-adenosyl-L-methionine site.

It belongs to the diphthine synthase family.

The protein localises to the cytoplasm. The enzyme catalyses 2-[(3S)-amino-3-carboxypropyl]-L-histidyl-[translation elongation factor 2] + 4 S-adenosyl-L-methionine = diphthine methyl ester-[translation elongation factor 2] + 4 S-adenosyl-L-homocysteine + 3 H(+). Its pathway is protein modification; peptidyl-diphthamide biosynthesis. Its function is as follows. S-adenosyl-L-methionine-dependent methyltransferase that catalyzes four methylations of the modified target histidine residue in translation elongation factor 2 (EF-2), to form an intermediate called diphthine methyl ester. The four successive methylation reactions represent the second step of diphthamide biosynthesis. In Neurospora crassa (strain ATCC 24698 / 74-OR23-1A / CBS 708.71 / DSM 1257 / FGSC 987), this protein is Diphthine methyl ester synthase (dph-5).